Consider the following 921-residue polypeptide: Alanine--tRNA ligase (921 aa).

The Zn(2+) site is built by histidine 602, histidine 606, cysteine 706, and histidine 710.

Belongs to the class-II aminoacyl-tRNA synthetase family. It depends on Zn(2+) as a cofactor.

Its subcellular location is the cytoplasm. The enzyme catalyses tRNA(Ala) + L-alanine + ATP = L-alanyl-tRNA(Ala) + AMP + diphosphate. In terms of biological role, catalyzes the attachment of alanine to tRNA(Ala) in a two-step reaction: alanine is first activated by ATP to form Ala-AMP and then transferred to the acceptor end of tRNA(Ala). Also edits incorrectly charged Ser-tRNA(Ala) and Gly-tRNA(Ala) via its editing domain. This chain is Alanine--tRNA ligase, found in Hyperthermus butylicus (strain DSM 5456 / JCM 9403 / PLM1-5).